The chain runs to 177 residues: Large ribosomal subunit protein uL6 (177 aa).

K44 is subject to N6-acetyllysine.

The protein belongs to the universal ribosomal protein uL6 family. Part of the 50S ribosomal subunit.

In terms of biological role, this protein binds to the 23S rRNA, and is important in its secondary structure. It is located near the subunit interface in the base of the L7/L12 stalk, and near the tRNA binding site of the peptidyltransferase center. This chain is Large ribosomal subunit protein uL6, found in Escherichia coli O139:H28 (strain E24377A / ETEC).